A 139-amino-acid chain; its full sequence is Aspartate 1-decarboxylase (139 aa).

Residue Ser-25 is the Schiff-base intermediate with substrate; via pyruvic acid of the active site. Ser-25 is modified (pyruvic acid (Ser)). Residue Thr-57 coordinates substrate. Tyr-58 functions as the Proton donor in the catalytic mechanism. 73 to 75 (GAA) is a substrate binding site. Positions 117-139 (LGADPAEPVPGSDQARSPQAVTA) are disordered. Over residues 130–139 (QARSPQAVTA) the composition is skewed to polar residues.

This sequence belongs to the PanD family. As to quaternary structure, heterooctamer of four alpha and four beta subunits. Pyruvate serves as cofactor. In terms of processing, is synthesized initially as an inactive proenzyme, which is activated by self-cleavage at a specific serine bond to produce a beta-subunit with a hydroxyl group at its C-terminus and an alpha-subunit with a pyruvoyl group at its N-terminus.

Its subcellular location is the cytoplasm. The enzyme catalyses L-aspartate + H(+) = beta-alanine + CO2. It functions in the pathway cofactor biosynthesis; (R)-pantothenate biosynthesis; beta-alanine from L-aspartate: step 1/1. In terms of biological role, catalyzes the pyruvoyl-dependent decarboxylation of aspartate to produce beta-alanine. The chain is Aspartate 1-decarboxylase from Streptomyces avermitilis (strain ATCC 31267 / DSM 46492 / JCM 5070 / NBRC 14893 / NCIMB 12804 / NRRL 8165 / MA-4680).